Reading from the N-terminus, the 1551-residue chain is Serine/threonine-protein kinase MRCK gamma (1551 aa).

One can recognise a Protein kinase domain in the interval 71 to 337 (FEILKVIGRG…LDDFRNHPFF (267 aa)). Residues 77–85 (IGRGAFGEV) and Lys-100 contribute to the ATP site. Asp-195 (proton acceptor) is an active-site residue. Phosphoserine; by autocatalysis occurs at positions 216 and 228. Thr-234 carries the post-translational modification Phosphothreonine; by autocatalysis. Residues 338 to 408 (EGVDWERLAS…TSGSHSPESS (71 aa)) enclose the AGC-kinase C-terminal domain. 2 coiled-coil regions span residues 406–678 (ESSS…SNWE) and 730–802 (KARR…RARG). 4 disordered regions span residues 467–486 (KASL…QDSD), 655–675 (ELAQ…ETES), 801–849 (RGPV…PEGR), and 863–886 (TANT…PRSF). Basic and acidic residues predominate over residues 655–674 (ELAQEQESKQRLEGERRETE). Over residues 835–849 (ATRHGGEPDLRPEGR) the composition is skewed to basic and acidic residues. The segment at 878-927 (SHTLRPRSFPSPTKCLRCTSLMLGLGRQGLGCDACGYFCHTTCAPQAPPC) adopts a Phorbol-ester/DAG-type zinc-finger fold. Residues 947 to 1066 (GTAYEGFLSV…WLQVLGELQR (120 aa)) enclose the PH domain. In terms of domain architecture, CNH spans 1092 to 1366 (LPHTLCAAIL…RPLNPEGSLF (275 aa)). The CRIB domain maps to 1437-1450 (ISPPTNFNHLVHVG). The segment at 1442 to 1551 (NFNHLVHVGP…PLSPELESSP (110 aa)) is disordered. A compositionally biased stretch (basic and acidic residues) spans 1457-1470 (GARDKSPAPEEKGR). Position 1482 is a phosphoserine (Ser-1482). Over residues 1511–1533 (TSLSSESVSCPQGSLSPATSLMQ) the composition is skewed to polar residues. The span at 1540 to 1551 (SLPLSPELESSP) shows a compositional bias: low complexity.

This sequence belongs to the protein kinase superfamily. AGC Ser/Thr protein kinase family. DMPK subfamily. In terms of assembly, homodimer and homotetramer via the coiled coil regions. Interacts tightly with GTP-bound but not GDP-bound CDC42. It depends on Mg(2+) as a cofactor. Expressed in heart and skeletal muscle.

It is found in the cytoplasm. It carries out the reaction L-seryl-[protein] + ATP = O-phospho-L-seryl-[protein] + ADP + H(+). The catalysed reaction is L-threonyl-[protein] + ATP = O-phospho-L-threonyl-[protein] + ADP + H(+). Its activity is regulated as follows. Maintained in an inactive, closed conformation by an interaction between the kinase domain and the negative autoregulatory C-terminal coiled-coil region. Agonist binding to the phorbol ester binding site disrupts this, releasing the kinase domain to allow N-terminus-mediated dimerization and kinase activation by transautophosphorylation. May act as a downstream effector of CDC42 in cytoskeletal reorganization. Contributes to the actomyosin contractility required for cell invasion, through the regulation of MYPT1 and thus MLC2 phosphorylation. This Homo sapiens (Human) protein is Serine/threonine-protein kinase MRCK gamma.